The chain runs to 346 residues: tRNA N6-adenosine threonylcarbamoyltransferase (346 aa).

A divalent metal cation is bound by residues histidine 117, histidine 121, and tyrosine 138. Substrate-binding positions include 138–142, aspartate 170, glycine 185, and asparagine 277; that span reads YVSGG. Residue aspartate 305 participates in a divalent metal cation binding.

It belongs to the KAE1 / TsaD family. In terms of assembly, component of the EKC/KEOPS complex composed of at least SPAP27G11.07c/BUD32, cgi121, gon7, pgp2 and SPAC4H3.13/PCC1; the whole complex dimerizes. The cofactor is a divalent metal cation.

It localises to the cytoplasm. The protein resides in the nucleus. It catalyses the reaction L-threonylcarbamoyladenylate + adenosine(37) in tRNA = N(6)-L-threonylcarbamoyladenosine(37) in tRNA + AMP + H(+). Functionally, component of the EKC/KEOPS complex that is required for the formation of a threonylcarbamoyl group on adenosine at position 37 (t(6)A37) in tRNAs that read codons beginning with adenine. The complex is probably involved in the transfer of the threonylcarbamoyl moiety of threonylcarbamoyl-AMP (TC-AMP) to the N6 group of A37. Pgp2 likely plays a direct catalytic role in this reaction, but requires other protein(s) of the complex to fulfill this activity. The EKC/KEOPS complex also promotes both telomere uncapping and telomere elongation. The complex is required for efficient recruitment of transcriptional coactivators. The protein is tRNA N6-adenosine threonylcarbamoyltransferase (pgp2) of Schizosaccharomyces pombe (strain 972 / ATCC 24843) (Fission yeast).